The following is a 363-amino-acid chain: Somatostatin receptor type 5 (363 aa).

At 1–35 (MEPLSLASTPSWNASAASSGNHNWSLVGSASPMGA) the chain is on the extracellular side. Asparagine 13 and asparagine 23 each carry an N-linked (GlcNAc...) asparagine glycan. A helical membrane pass occupies residues 36–63 (RAVLVPVLYLLVCTVGLSGNTLVIYVVL). At 64 to 73 (RHAKMKTVTN) the chain is on the cytoplasmic side. Residues 74-99 (VYILNLAVADVLFMLGLPFLATQNAV) traverse the membrane as a helical segment. Residues 100 to 111 (VSYWPFGSFLCR) lie on the Extracellular side of the membrane. Cysteine 110 and cysteine 185 are disulfide-bonded. A helical membrane pass occupies residues 112-133 (LVMTLDGINQFTSIFCLMVMSV). At 134–155 (DRYLAVVHPLRSARWRRPRVAK) the chain is on the cytoplasmic side. Residues 156 to 176 (MASAAVWVFSLLMSLPLLVFA) form a helical membrane-spanning segment. At 177 to 196 (DVQEGWGTCNLSWPEPVGLW) the chain is on the extracellular side. Asparagine 186 carries an N-linked (GlcNAc...) asparagine glycan. A helical membrane pass occupies residues 197 to 221 (GAAFITYTSVLGFFGPLLVICLCYL). Residues 222–247 (LIVVKVKAAGMRVGSSRRRRSEPKVT) are Cytoplasmic-facing. Residues 248 to 273 (RMVVVVVLVFVGCWLPFFIVNIVNLA) form a helical membrane-spanning segment. Topologically, residues 274–283 (FTLPEEPTSA) are extracellular. The helical transmembrane segment at 284-308 (GLYFFVVVLSYANSCANPLLYGFLS) threads the bilayer. The Cytoplasmic portion of the chain corresponds to 309-363 (DNFRQSFRKVLCLRRGYGMEDADAIEPRPDKSGRPQATLPTRSCEANGLMQTSRI). Cysteine 320 is lipidated: S-palmitoyl cysteine; by ZDHHC5. Residues 331–363 (DAIEPRPDKSGRPQATLPTRSCEANGLMQTSRI) are disordered.

This sequence belongs to the G-protein coupled receptor 1 family. As to quaternary structure, heterodimer with SSTR2. Heterodimerization with SSTR2 increases cell growth inhibition activity of SSTR2. In terms of processing, palmitoylated at Cys-320 by ZDHHC5, but not ZDHHC8. Palmitoylation creates an additional intracellular loop which is thought to be important for efficient coupling to G-proteins and may target the protein to lipid rafts. In terms of tissue distribution, prominent in the pituitary and small intestine. Low levels in islets and spleen. Not detected in kidney, pancreas, cerebellum, or cortex.

It localises to the cell membrane. In terms of biological role, receptor for somatostatin-28. The activity of this receptor is mediated by G proteins which inhibit adenylyl cyclase. Increases cell growth inhibition activity of SSTR2 following heterodimerization. The sequence is that of Somatostatin receptor type 5 (Sstr5) from Rattus norvegicus (Rat).